The following is a 198-amino-acid chain: Holliday junction branch migration complex subunit RuvA (198 aa).

The interval 1 to 64 is domain I; that stretch reads MYEYIKGEYM…EDFIGLYGFE (64 aa). The domain II stretch occupies residues 65 to 143; it reads SLEELEMFKM…TDELLNCIDE (79 aa). The interval 144–154 is flexible linker; the sequence is FDDVTQDNSLA. A domain III region spans residues 154-198; sequence AVSEALSALISLGYTEKEAEKVLRDVDKSESVENIIKSALVKLMG.

Belongs to the RuvA family. Homotetramer. Forms an RuvA(8)-RuvB(12)-Holliday junction (HJ) complex. HJ DNA is sandwiched between 2 RuvA tetramers; dsDNA enters through RuvA and exits via RuvB. An RuvB hexamer assembles on each DNA strand where it exits the tetramer. Each RuvB hexamer is contacted by two RuvA subunits (via domain III) on 2 adjacent RuvB subunits; this complex drives branch migration. In the full resolvosome a probable DNA-RuvA(4)-RuvB(12)-RuvC(2) complex forms which resolves the HJ.

The protein resides in the cytoplasm. The RuvA-RuvB-RuvC complex processes Holliday junction (HJ) DNA during genetic recombination and DNA repair, while the RuvA-RuvB complex plays an important role in the rescue of blocked DNA replication forks via replication fork reversal (RFR). RuvA specifically binds to HJ cruciform DNA, conferring on it an open structure. The RuvB hexamer acts as an ATP-dependent pump, pulling dsDNA into and through the RuvAB complex. HJ branch migration allows RuvC to scan DNA until it finds its consensus sequence, where it cleaves and resolves the cruciform DNA. This is Holliday junction branch migration complex subunit RuvA from Clostridium botulinum (strain Eklund 17B / Type B).